Here is a 371-residue protein sequence, read N- to C-terminus: Dual-specificity RNA methyltransferase RlmN (371 aa).

E99 serves as the catalytic Proton acceptor. In terms of domain architecture, Radical SAM core spans 106 to 333 (DDNRATLCIS…AIRRASKGQD (228 aa)). A disulfide bridge links C113 with C338. [4Fe-4S] cluster contacts are provided by C120, C124, and C127. Residues 165 to 166 (GE), S197, 219 to 221 (SLN), and N295 each bind S-adenosyl-L-methionine. C338 acts as the S-methylcysteine intermediate in catalysis. A disordered region spans residues 345 to 371 (LTVSPPAQESERNSARPDRSQGKGKHL). Residues 353–365 (ESERNSARPDRSQ) are compositionally biased toward basic and acidic residues.

This sequence belongs to the radical SAM superfamily. RlmN family. The cofactor is [4Fe-4S] cluster.

It is found in the cytoplasm. It carries out the reaction adenosine(2503) in 23S rRNA + 2 reduced [2Fe-2S]-[ferredoxin] + 2 S-adenosyl-L-methionine = 2-methyladenosine(2503) in 23S rRNA + 5'-deoxyadenosine + L-methionine + 2 oxidized [2Fe-2S]-[ferredoxin] + S-adenosyl-L-homocysteine. It catalyses the reaction adenosine(37) in tRNA + 2 reduced [2Fe-2S]-[ferredoxin] + 2 S-adenosyl-L-methionine = 2-methyladenosine(37) in tRNA + 5'-deoxyadenosine + L-methionine + 2 oxidized [2Fe-2S]-[ferredoxin] + S-adenosyl-L-homocysteine. Its function is as follows. Specifically methylates position 2 of adenine 2503 in 23S rRNA and position 2 of adenine 37 in tRNAs. m2A2503 modification seems to play a crucial role in the proofreading step occurring at the peptidyl transferase center and thus would serve to optimize ribosomal fidelity. This is Dual-specificity RNA methyltransferase RlmN from Syntrophotalea carbinolica (strain DSM 2380 / NBRC 103641 / GraBd1) (Pelobacter carbinolicus).